The chain runs to 349 residues: Short-wave-sensitive opsin 1 (349 aa).

The Extracellular portion of the chain corresponds to 1–34 (MSKMPEEEEFYLFKNISSVGPWDGPQYHIAPVWA). An N-linked (GlcNAc...) asparagine glycan is attached at Asn-15. The chain crosses the membrane as a helical span at residues 35–59 (FQLQAAFMGIVFLAGLPLNSMVLVA). At 60-71 (TVRYKKLRHPLN) the chain is on the cytoplasmic side. A helical transmembrane segment spans residues 72-97 (YVLVNVSVGGFLLCIFSVLPVFVNSC). At 98–111 (NGYFVFGRHVCALE) the chain is on the extracellular side. Cysteines 108 and 185 form a disulfide. A helical transmembrane segment spans residues 112-131 (GFLGTVAGLVTGWSLAFLAF). Residues 132 to 150 (ERYIVICKPFGNFRFSSKH) lie on the Cytoplasmic side of the membrane. The helical transmembrane segment at 151–174 (ALMVVLTTWTIGIGVSIPPFFGWS) threads the bilayer. Residues 175–200 (RYIAEGLQCSCGPDWYTVGTKYRSEY) lie on the Extracellular side of the membrane. The chain crosses the membrane as a helical span at residues 201 to 228 (YTWFLFIFCFIVPLSLICFSYAQLLRAL). The Cytoplasmic segment spans residues 229-250 (KAVAAQQQESATTQKAEREVSR). Residues 251 to 274 (MVVVMVGSFCVCYVPYAALAMYMV) traverse the membrane as a helical segment. Over 275–282 (NNRNHGLD) the chain is Extracellular. A helical transmembrane segment spans residues 283–307 (LRLVSIPAFFSKSSCIYNPIIYCFM). Residue Lys-294 is modified to N6-(retinylidene)lysine. Topologically, residues 308-349 (NKQFRACIMEMVCGKAMTDESDISSSQKTEVSTVSSSQVGPN) are cytoplasmic.

Belongs to the G-protein coupled receptor 1 family. Opsin subfamily. Phosphorylated on some or all of the serine and threonine residues present in the C-terminal region.

The protein resides in the cell membrane. Its subcellular location is the photoreceptor inner segment. The protein localises to the cell projection. It is found in the cilium. It localises to the photoreceptor outer segment. The protein resides in the cytoplasm. Its subcellular location is the perinuclear region. Functionally, visual pigments are the light-absorbing molecules that mediate vision. They consist of an apoprotein, opsin, covalently linked to cis-retinal. Required for the maintenance of cone outer segment organization in the ventral retina, but not essential for the maintenance of functioning cone photoreceptors. Involved in ensuring correct abundance and localization of retinal membrane proteins. May increase spectral sensitivity in dim light. The polypeptide is Short-wave-sensitive opsin 1 (OPN1SW) (Saimiri boliviensis boliviensis (Bolivian squirrel monkey)).